Here is a 434-residue protein sequence, read N- to C-terminus: Nicotinate phosphoribosyltransferase (434 aa).

The residue at position 242 (histidine 242) is a Phosphohistidine; by autocatalysis.

Belongs to the NAPRTase family. Transiently phosphorylated on a His residue during the reaction cycle. Phosphorylation strongly increases the affinity for substrates and increases the rate of nicotinate D-ribonucleotide production. Dephosphorylation regenerates the low-affinity form of the enzyme, leading to product release.

It carries out the reaction nicotinate + 5-phospho-alpha-D-ribose 1-diphosphate + ATP + H2O = nicotinate beta-D-ribonucleotide + ADP + phosphate + diphosphate. Its pathway is cofactor biosynthesis; NAD(+) biosynthesis; nicotinate D-ribonucleotide from nicotinate: step 1/1. In terms of biological role, catalyzes the synthesis of beta-nicotinate D-ribonucleotide from nicotinate and 5-phospho-D-ribose 1-phosphate at the expense of ATP. This Brucella melitensis biotype 1 (strain ATCC 23456 / CCUG 17765 / NCTC 10094 / 16M) protein is Nicotinate phosphoribosyltransferase.